The chain runs to 424 residues: Enolase (424 aa).

Glutamine 163 provides a ligand contact to (2R)-2-phosphoglycerate. The Proton donor role is filled by glutamate 204. Mg(2+)-binding residues include aspartate 241, glutamate 284, and aspartate 311. (2R)-2-phosphoglycerate-binding residues include lysine 336, arginine 365, serine 366, and lysine 387. The Proton acceptor role is filled by lysine 336.

The protein belongs to the enolase family. Mg(2+) serves as cofactor.

It localises to the cytoplasm. The protein localises to the secreted. It is found in the cell surface. It catalyses the reaction (2R)-2-phosphoglycerate = phosphoenolpyruvate + H2O. It participates in carbohydrate degradation; glycolysis; pyruvate from D-glyceraldehyde 3-phosphate: step 4/5. Functionally, catalyzes the reversible conversion of 2-phosphoglycerate (2-PG) into phosphoenolpyruvate (PEP). It is essential for the degradation of carbohydrates via glycolysis. This chain is Enolase, found in Dictyoglomus turgidum (strain DSM 6724 / Z-1310).